A 484-amino-acid polypeptide reads, in one-letter code: Malonate-semialdehyde dehydrogenase 1 (484 aa).

NAD(+) is bound by residues phenylalanine 154, lysine 178, glutamate 181, arginine 182, and serine 231. The Nucleophile role is filled by cysteine 286. Glutamate 384 is an NAD(+) binding site.

This sequence belongs to the aldehyde dehydrogenase family. IolA subfamily. As to quaternary structure, homotetramer.

It carries out the reaction 3-oxopropanoate + NAD(+) + CoA + H2O = hydrogencarbonate + acetyl-CoA + NADH + H(+). The catalysed reaction is 2-methyl-3-oxopropanoate + NAD(+) + CoA + H2O = propanoyl-CoA + hydrogencarbonate + NADH + H(+). The protein operates within polyol metabolism; myo-inositol degradation into acetyl-CoA; acetyl-CoA from myo-inositol: step 7/7. Its function is as follows. Catalyzes the oxidation of malonate semialdehyde (MSA) and methylmalonate semialdehyde (MMSA) into acetyl-CoA and propanoyl-CoA, respectively. Is involved in a myo-inositol catabolic pathway. Bicarbonate, and not CO2, is the end-product of the enzymatic reaction. The sequence is that of Malonate-semialdehyde dehydrogenase 1 from Bacillus licheniformis (strain ATCC 14580 / DSM 13 / JCM 2505 / CCUG 7422 / NBRC 12200 / NCIMB 9375 / NCTC 10341 / NRRL NRS-1264 / Gibson 46).